Reading from the N-terminus, the 555-residue chain is Urocanate hydratase (555 aa).

NAD(+) contacts are provided by residues Gly51 to Gly52, Gln129, Gly175 to Gly177, Glu195, Gln262 to His266, Tyr272 to Leu273, and Tyr321. The active site involves Cys409. Gly491 contributes to the NAD(+) binding site.

The protein belongs to the urocanase family. It depends on NAD(+) as a cofactor.

The protein resides in the cytoplasm. The catalysed reaction is 4-imidazolone-5-propanoate = trans-urocanate + H2O. The protein operates within amino-acid degradation; L-histidine degradation into L-glutamate; N-formimidoyl-L-glutamate from L-histidine: step 2/3. In terms of biological role, catalyzes the conversion of urocanate to 4-imidazolone-5-propionate. This chain is Urocanate hydratase, found in Xanthomonas euvesicatoria pv. vesicatoria (strain 85-10) (Xanthomonas campestris pv. vesicatoria).